The sequence spans 275 residues: NAD(P)H-hydrate epimerase (275 aa).

The YjeF N-terminal domain occupies 49-258; it reads AIKIDQELFS…ALAAKYELNL (210 aa). Residue 102-106 participates in (6S)-NADPHX binding; sequence NNGGD. K(+) is bound by residues Asn103 and Asp167. (6S)-NADPHX contacts are provided by residues 171–177 and Asp200; that span reads GFSFKPP. Ser203 is a K(+) binding site.

The protein belongs to the NnrE/AIBP family. Requires K(+) as cofactor.

The enzyme catalyses (6R)-NADHX = (6S)-NADHX. The catalysed reaction is (6R)-NADPHX = (6S)-NADPHX. Catalyzes the epimerization of the S- and R-forms of NAD(P)HX, a damaged form of NAD(P)H that is a result of enzymatic or heat-dependent hydration. This is a prerequisite for the S-specific NAD(P)H-hydrate dehydratase to allow the repair of both epimers of NAD(P)HX. This Ixodes scapularis (Black-legged tick) protein is NAD(P)H-hydrate epimerase.